Here is a 109-residue protein sequence, read N- to C-terminus: Spermidine export protein MdtI (109 aa).

4 helical membrane passes run 6 to 26, 36 to 56, 64 to 84, and 88 to 108; these read WVHA…NVFL, IFGL…SQAV, AYAL…WILF, and LNRK…MVKL.

This sequence belongs to the drug/metabolite transporter (DMT) superfamily. Small multidrug resistance (SMR) (TC 2.A.7.1) family. MdtI subfamily. Forms a complex with MdtJ.

Its subcellular location is the cell inner membrane. Catalyzes the excretion of spermidine. In Escherichia coli O81 (strain ED1a), this protein is Spermidine export protein MdtI.